The following is a 324-amino-acid chain: Olfactory receptor 4K15 (324 aa).

The Extracellular segment spans residues Met-1–Pro-25. Asn-2 and Asn-5 each carry an N-linked (GlcNAc...) asparagine glycan. A helical membrane pass occupies residues Phe-26–Val-49. Topologically, residues Thr-50–Thr-57 are cytoplasmic. The chain crosses the membrane as a helical span at residues Pro-58–Pro-79. Over Lys-80–Gln-100 the chain is Extracellular. Cys-97 and Cys-189 are disulfide-bonded. The helical transmembrane segment at Ile-101–Tyr-120 threads the bilayer. The Cytoplasmic segment spans residues Asp-121–Arg-139. The chain crosses the membrane as a helical span at residues Val-140–Ser-158. Topologically, residues Gln-159–Val-195 are extracellular. Residues Ser-196–Thr-219 traverse the membrane as a helical segment. Residues Val-220 to Lys-235 are Cytoplasmic-facing. A helical membrane pass occupies residues Ala-236–Tyr-258. Over Val-259–Lys-269 the chain is Extracellular. The helical transmembrane segment at Val-270 to Leu-289 threads the bilayer. The Cytoplasmic segment spans residues Arg-290 to Lys-324.

This sequence belongs to the G-protein coupled receptor 1 family.

It localises to the cell membrane. Functionally, odorant receptor. This is Olfactory receptor 4K15 (OR4K15) from Homo sapiens (Human).